An 80-amino-acid chain; its full sequence is MKLVLAIVLILMLLSLSTGAEMSDNHASRSATALTDRLLGPKASICRGTGGRCTKDKHCCGWLCCGGPSVGCATSFAPCN.

An N-terminal signal peptide occupies residues 1–19 (MKLVLAIVLILMLLSLSTG). Residues 20 to 42 (AEMSDNHASRSATALTDRLLGPK) constitute a propeptide that is removed on maturation. Intrachain disulfides connect Cys-46–Cys-60, Cys-53–Cys-65, Cys-59–Cys-72, and Cys-64–Cys-79.

The protein belongs to the conotoxin I3 superfamily. As to expression, expressed by the venom duct.

The protein localises to the secreted. In Conus pulicarius (Flea-bitten cone), this protein is Conotoxin Pu11.1.